The following is a 428-amino-acid chain: Bifunctional IPC transferase and DIPP synthase (428 aa).

Positions 2–227 (VETAVILAGG…KAKKYLVKTA (226 aa)) are mobA-like NTP transferase. CTP-binding positions include 8-10 (LAG), Lys25, Glu80, and Glu116. Glu116 contributes to the Mg(2+) binding site. Residues 228-425 (IKGVGDGFIS…LTIYLVWKKK (198 aa)) are CDP-alcohol phosphatidyltransferases. Transmembrane regions (helical) follow at residues 266-286 (FLLGMFSALVAYFSPALGGIL), 336-356 (PSWDFMPWVFAALFGSVMVSY), and 389-409 (MIMIFTILGWIKALFVVLAII).

This sequence in the N-terminal section; belongs to the MobA family. In the C-terminal section; belongs to the CDP-alcohol phosphatidyltransferase class-I family. Mg(2+) serves as cofactor.

It localises to the membrane. The catalysed reaction is 1D-myo-inositol 3-phosphate + CTP + H(+) = CDP-1L-myo-inositol + diphosphate. It catalyses the reaction CDP-1L-myo-inositol + 1D-myo-inositol 3-phosphate = bis(1L-myo-inositol) 3,1'-phosphate 1-phosphate + CMP + H(+). Functionally, involved in biosynthesis of di-myo-inositol phosphate (DIP), a widespread organic solute in microorganisms adapted to hot environments. Catalyzes the condensation of CTP and L-myo-inositol-1-phosphate into CDP-L-myo-inositol, as well as the biosynthesis of di-myo-inositol-1,3'-phosphate-1'-phosphate (DIPP) from CDP-L-myo-inositol and L-myo-inositol-1-phosphate. This Aquifex aeolicus (strain VF5) protein is Bifunctional IPC transferase and DIPP synthase (spsI).